The following is a 678-amino-acid chain: Zinc finger translocation-associated protein (678 aa).

Disordered stretches follow at residues 1-100 (MEPG…PGRD), 174-250 (GAGG…GSRG), 333-413 (LSEL…RDHR), and 493-583 (PESP…NYQP). The segment covering 66-78 (PSSRARGPASSGR) has biased composition (low complexity). The segment covering 79–88 (KYSDHCEARA) has biased composition (basic and acidic residues). Positions 187-200 (AEEEEEEDEEEEEG) are enriched in acidic residues. Positions 205-214 (ACPPKGSGKA) are enriched in low complexity. Lys375 is covalently cross-linked (Glycyl lysine isopeptide (Lys-Gly) (interchain with G-Cter in SUMO2)). A compositionally biased stretch (low complexity) spans 493 to 509 (PESPSVPVAPSTASASE). 2 stretches are compositionally biased toward acidic residues: residues 512 to 524 (GGAE…EEWW) and 539 to 549 (AEEEDDEDDSQ). Residues 557–572 (PPLPLPPPPPPPPPPP) are compositionally biased toward pro residues. The segment covering 573 to 583 (RSREQRRNYQP) has biased composition (basic and acidic residues).

In Mus musculus (Mouse), this protein is Zinc finger translocation-associated protein.